The following is a 2294-amino-acid chain: Protein Ycf2 (2294 aa).

1635–1642 lines the ATP pocket; the sequence is GSIGTGRS.

The protein belongs to the Ycf2 family.

It localises to the plastid. The protein resides in the chloroplast stroma. In terms of biological role, probable ATPase of unknown function. Its presence in a non-photosynthetic plant (Epifagus virginiana) and experiments in tobacco indicate that it has an essential function which is probably not related to photosynthesis. This chain is Protein Ycf2, found in Ranunculus macranthus (Large buttercup).